A 314-amino-acid chain; its full sequence is Solute carrier family 25 member 33 (314 aa).

3 Solcar repeats span residues 4-111, 119-206, and 224-308; these read KDTL…SKET, NSGV…LKKY, and SDFL…IVHL. Helical transmembrane passes span 7 to 27, 44 to 58, 114 to 134, 183 to 203, 226 to 246, and 291 to 311; these read LLHL…TCPL, VFQV…AGVI, GIFV…AAFI, LTAS…YETL, FLGL…IAYP, and QIPN…LLAE.

This sequence belongs to the mitochondrial carrier (TC 2.A.29) family.

It localises to the mitochondrion inner membrane. Mitochondrial transporter that imports/exports pyrimidine nucleotides into and from mitochondria which participates in dendritic cell endocytosis. This Danio rerio (Zebrafish) protein is Solute carrier family 25 member 33 (slc25a33).